The following is a 102-amino-acid chain: Pole-localizer protein TmaR (102 aa).

Residues 7–34 adopt a coiled-coil conformation; it reads IINQARRKNKLKRELQDNQKKIRDNQKR.

This sequence belongs to the pole-localizer TmaR family.

It localises to the cytoplasm. Its function is as follows. Pole-localizer protein involved in the regulation of several cellular processes. The chain is Pole-localizer protein TmaR from Aliivibrio salmonicida (strain LFI1238) (Vibrio salmonicida (strain LFI1238)).